The chain runs to 1588 residues: MSWKRNYFSGSRGSVQGMFAPRSSMSIAPSKGLSNEPGQNSCFLNSALQVLWHLDIFRRSFRQLTTHKCMGDSCIFCALKGIFNQFQCSSEKVLPSDTLRSALAKTFQDEQRFQLGIMDDAAECFENLLMRIHFHIADETKEDICTAQHCISHQKFAMTLFEQCVCSSCGATSDPLPFIQMVHYISTTALCNQAICMLEKREKPSPSMFGELLQNASTMGDLRNCPSNCGERIRIRRVLMNAPQIITIGLVWDSEHSDLAEDVIHSLGTCLKLGDLFFRVTDDRAKQSELYLVGMICYYGKHYSTFFFQTKIRKWMYFDDAHVKEIGPKWKDVVTKCIKGHYQPLLLLYADPQGTPVSAQDLPPHAQFLPYTKTCYDSEDSGHLTDSECNQKHTSKKGSLVERRRSSGRVRRKGDEPQASGYHSEGETLKEKQAPRNASKSSSSSRLKDFKETVSNMIHSRPSLASQTSAGSPCVGRAGDQLDKIPPRNFPLQARGWETESTSSEAKSSSSSKYRPTWRPKRESLNIDSIFSKDRRKHCGYTQLRTFPEDAAKEFTPDEVSKPTANDIKDGGSRSQHKLWGTARPGSHLLEQHPRLIQRMESGYESSERNSSSPVSLDAAPPDSVNVYRDQSTKRPVGFVPSWRHIPKSHSSSILEVDCTAPMTSWTKTQPLSDGEVTSRSELDELQEEVVRRAQEQELRKKREKELEAAKGFNPHPSRYMDLDELQNQGRSDGFERSLQEANSIFEESLHLEQKGDCAAALALCNEAISKLRLTLHDASSSTHSRALVDKKLQISIRKARSLQDRMQQQASSQQPVQPSASLPSQGGALPQPTSEQPITLQVLLNQEAQLEPCKDTELGATSSFFHSPASCPELHSSLIPESPVSSVSQHSPPGTSSLKLLTSFEVDSVNRSAFHRQGLPKATGRTEMNSQHECLPLDALEDRLQGHREDNSCCSKFPPREGRDIAQDQLFEGKKNPADISMGMPWSYSTGEATSERVIYSLNSPSSSSAQPSIPPYSSCHPITSAASSPVLHAADPMQKLNQHVQAQSLQTSLTSKVVRSSEEPYRLEFPSTKGLVRSLAEQFQKMQNTSTRDVIGSQDRSLPNGVRKSSSPSDFMPPLSQGPGREHCRWVKQPRSPDGRERPPCWEDPAAHPPLSMGSGLPDGETSRTAQPRLAEPDMYQGKLPQVTDIRSKELGSSVNLGTSLPLDSWVNVTRLCDSQVKPSAPGPGDKSSSHDSHPRATCLERSPILLHPHWDQDTEQETSELESLYQASLQASSHTAYSDWRSQDVAWQPLSLAGSADGMGRRLHSAPGLDLSKPLTAEMEHVLYEPSTVPVSQDSSNVRKKTLETGHHCSSSSSLPVIHDPPVFLLDPKLYPPQPQFLSPDVLMPSMAGEPYRPPGTSRSVHQFLAMCDRDETPQGVKYTGRTLNYRSLPHRSRTDASWGPGSETNQHIGARVLTMPACKPQLTYTATLPERHQGLQVPHAQSWGNLFHSPSHPSAVHPGSPPSSNLHVPLRSTWNSGPVLGSRTPGPRRIDMPPDDDWRQSSYPSQDRHRSPGEERIMFALSNAAGREQNRVRFLQHSRW.

An Omega-N-methylarginine modification is found at Arg-12. A USP domain is found at 31 to 352; it reads KGLSNEPGQN…QPLLLLYADP (322 aa). The Nucleophile role is filled by Cys-42. The Zn(2+) site is built by His-67, Cys-69, Cys-74, Cys-77, His-133, Cys-145, Cys-150, His-153, Cys-166, Cys-169, Cys-225, and Cys-229. The Proton acceptor role is filled by His-302. Basic and acidic residues-rich tracts occupy residues 382–391 and 424–434; these read GHLTDSECNQ and SEGETLKEKQA. 3 disordered regions span residues 382-519, 555-577, and 601-624; these read GHLT…PTWR, FTPD…RSQH, and ESGY…PPDS. Ser-424 is modified (phosphoserine). The span at 453–471 shows a compositional bias: polar residues; that stretch reads TVSNMIHSRPSLASQTSAG. The span at 499-513 shows a compositional bias: low complexity; it reads TESTSSEAKSSSSSK. Residues 555-572 show a composition bias toward basic and acidic residues; the sequence is FTPDEVSKPTANDIKDGG. The span at 601–616 shows a compositional bias: low complexity; the sequence is ESGYESSERNSSSPVS. A phosphoserine mark is found at Ser-613 and Ser-616. The stretch at 682–712 forms a coiled coil; that stretch reads ELDELQEEVVRRAQEQELRKKREKELEAAKG. 4 disordered regions span residues 801–834, 1089–1182, 1221–1242, and 1491–1561; these read RSLQ…PQPT, QNTS…PDMY, SQVK…SHPR, and WGNL…RSPG. Residues 808 to 826 show a composition bias toward low complexity; sequence QQQASSQQPVQPSASLPSQ. Positions 1126–1147 are enriched in basic and acidic residues; it reads GREHCRWVKQPRSPDGRERPPC. Ser-1138 carries the phosphoserine modification. Over residues 1510-1524 the composition is skewed to polar residues; that stretch reads PSSNLHVPLRSTWNS. Residues 1536-1547 are compositionally biased toward basic and acidic residues; the sequence is RRIDMPPDDDWR.

This sequence belongs to the peptidase C19 family.

The catalysed reaction is Thiol-dependent hydrolysis of ester, thioester, amide, peptide and isopeptide bonds formed by the C-terminal Gly of ubiquitin (a 76-residue protein attached to proteins as an intracellular targeting signal).. Deubiquitinase that specifically mediates 'Lys-63'-linked deubiquitination of substrates with a polyubiquitin chain composed of at least 3 ubiquitins. Specifically recognizes ubiquitin chain in position S2 and catalyzes cleavage of polyubiquitin within 'Lys-63'-linked chains. Not able to deubiquitinate substrates with shorter ubiquitin chains. Mediates deubiquitination of PLK4, maintaining PLK4 stability by reducing its ubiquitination-mediated degradation. The polypeptide is Ubiquitin carboxyl-terminal hydrolase 54 (Usp54) (Mus musculus (Mouse)).